Reading from the N-terminus, the 370-residue chain is UDP-N-acetylglucosamine--N-acetylmuramyl-(pentapeptide) pyrophosphoryl-undecaprenol N-acetylglucosamine transferase (370 aa).

UDP-N-acetyl-alpha-D-glucosamine contacts are provided by residues 15 to 17 (TGG), Asn126, Arg169, Ser197, and Gln299.

It belongs to the glycosyltransferase 28 family. MurG subfamily.

The protein resides in the cell inner membrane. The catalysed reaction is di-trans,octa-cis-undecaprenyl diphospho-N-acetyl-alpha-D-muramoyl-L-alanyl-D-glutamyl-meso-2,6-diaminopimeloyl-D-alanyl-D-alanine + UDP-N-acetyl-alpha-D-glucosamine = di-trans,octa-cis-undecaprenyl diphospho-[N-acetyl-alpha-D-glucosaminyl-(1-&gt;4)]-N-acetyl-alpha-D-muramoyl-L-alanyl-D-glutamyl-meso-2,6-diaminopimeloyl-D-alanyl-D-alanine + UDP + H(+). It participates in cell wall biogenesis; peptidoglycan biosynthesis. In terms of biological role, cell wall formation. Catalyzes the transfer of a GlcNAc subunit on undecaprenyl-pyrophosphoryl-MurNAc-pentapeptide (lipid intermediate I) to form undecaprenyl-pyrophosphoryl-MurNAc-(pentapeptide)GlcNAc (lipid intermediate II). The protein is UDP-N-acetylglucosamine--N-acetylmuramyl-(pentapeptide) pyrophosphoryl-undecaprenol N-acetylglucosamine transferase of Methylorubrum populi (strain ATCC BAA-705 / NCIMB 13946 / BJ001) (Methylobacterium populi).